A 1064-amino-acid chain; its full sequence is Lysine-specific demethylase 4A (1064 aa).

Ala2 bears the N-acetylalanine mark. One can recognise a JmjN domain in the interval Ile14–Arg56. Tyr132 lines the 2-oxoglutarate pocket. One can recognise a JmjC domain in the interval Glu142–Cys308. Fe cation is bound by residues His188 and Glu190. The 2-oxoglutarate site is built by Asn198 and Lys206. Zn(2+) is bound by residues Cys234 and His240. Position 241 (Lys241) interacts with 2-oxoglutarate. Position 276 (His276) interacts with Fe cation. Residues Cys306 and Cys308 each coordinate Zn(2+). Positions Glu358–Asp384 are disordered. The segment covering Glu366 to Glu382 has biased composition (acidic residues). A (Microbial infection) Glycyl lysine isopeptide (Lys-Gly) (interchain with G-Cter in SUMO) cross-link involves residue Lys471. Disordered stretches follow at residues Phe501–Gly537 and Ser616–Ser641. The span at Ser509 to Ser532 shows a compositional bias: low complexity. Residue Ser523 is modified to Phosphoserine. Positions Arg597–Lys638 are interaction with NCOR1. Positions Ser616 to Glu634 are enriched in acidic residues. A PHD-type 1 zinc finger spans residues Met709 to Ser767. The C2HC pre-PHD-type zinc-finger motif lies at Glu772–Ala805. Residues Leu828 to Lys885 form a PHD-type 2 zinc finger. Tudor domains follow at residues Gln897–Phe954 and Gly955–Pro1011.

It belongs to the JHDM3 histone demethylase family. In terms of assembly, interacts with histone deacetylase proteins HDAC1, HDAC2 and HDAC3. Interacts with RB and NCOR1. Interacts with VRK1. Interacts with FBXO22; this interaction promotes KDM4A ubiquitination. (Microbial infection) Interacts with HTLV-1 Tax protein. Requires Fe(2+) as cofactor. (Microbial infection) SUMOylated by human herpesvirus 8 E3 SUMO-protein ligase K-bZIP/K8 at Lys-471; thereby modulating the chromatin binding and histone demethylase activity of KDM4A. In terms of processing, ubiquitinated by RNF8 and RNF168 following DNA damage, leading to its degradation. Degradation promotes accessibility of H4K20me2 mark for DNA repair protein TP53BP1, which is then recruited. Also ubiquitinated by the SCF(FBXO22) complex; leading to proteasomal degradation. Ubiquitous.

The protein localises to the nucleus. It catalyses the reaction N(6),N(6),N(6)-trimethyl-L-lysyl(9)-[histone H3] + 2 2-oxoglutarate + 2 O2 = N(6)-methyl-L-lysyl(9)-[histone H3] + 2 formaldehyde + 2 succinate + 2 CO2. The catalysed reaction is N(6),N(6),N(6)-trimethyl-L-lysyl(36)-[histone H3] + 2 2-oxoglutarate + 2 O2 = N(6)-methyl-L-lysyl(36)-[histone H3] + 2 formaldehyde + 2 succinate + 2 CO2. With respect to regulation, several specific inhibitors are being developed and tested. Histone demethylase that specifically demethylates 'Lys-9' and 'Lys-36' residues of histone H3, thereby playing a central role in histone code. Does not demethylate histone H3 'Lys-4', H3 'Lys-27' nor H4 'Lys-20'. Demethylates trimethylated H3 'Lys-9' and H3 'Lys-36' residue, while it has no activity on mono- and dimethylated residues. Demethylation of Lys residue generates formaldehyde and succinate. Participates in transcriptional repression of ASCL2 and E2F-responsive promoters via the recruitment of histone deacetylases and NCOR1, respectively. In terms of biological role, crucial for muscle differentiation, promotes transcriptional activation of the Myog gene by directing the removal of repressive chromatin marks at its promoter. Lacks the N-terminal demethylase domain. The protein is Lysine-specific demethylase 4A (KDM4A) of Homo sapiens (Human).